The chain runs to 637 residues: Chaperone protein dnaK2 (637 aa).

Threonine 197 is modified (phosphothreonine; by autocatalysis). The disordered stretch occupies residues 602-637; the sequence is AAAGGAAPGGDAGASAASGGGDASDDVIDAEFTETK. Gly residues predominate over residues 603-623; it reads AAGGAAPGGDAGASAASGGGD. The segment covering 624 to 637 has biased composition (acidic residues); it reads ASDDVIDAEFTETK.

The protein belongs to the heat shock protein 70 family.

In terms of biological role, acts as a chaperone. The polypeptide is Chaperone protein dnaK2 (dnaK2) (Parasynechococcus marenigrum (strain WH8102)).